Here is an 899-residue protein sequence, read N- to C-terminus: Protein argonaute (899 aa).

The segment at 107 to 129 is disordered; it reads TQKPKRRGGRAGGMRGNRGGPST. Over residues 116–125 the composition is skewed to gly residues; sequence RAGGMRGNRG. The 85-residue stretch at 229–313 folds into the PAZ domain; it reads SMCELLNENR…KQDDYCNSVL (85 aa). One can recognise a Piwi domain in the interval 555-878; sequence LVVVVIPGPK…LSKFCGEILG (324 aa).

It belongs to the argonaute family. Ago subfamily. Interacts with miR2. Highly specific binding to the mRNA m7G-cap. May be a component of the RNA-induced silencing complex (RISC), a sequence-specific, multicomponent nuclease that destroys or silences messenger RNAs homologous to the silencing trigger.

Its subcellular location is the cytoplasm. Plays an essential role in growth and, with Dicer, also involved in microRNA (miRNA)-mediated translational repression. The RNA interference pathway is implicated in antigenic variation having a role in regulation of variant-specific surface protein (VSP)-coding gene expression. Several VSP genes are transcribed but only transcripts encoding the VSP to be expressed accumulate. Antisense RNAs corresponding to the silenced VSP genes are detected. The polypeptide is Protein argonaute (Giardia intestinalis (strain ATCC 50581 / GS clone H7) (Giardia lamblia)).